The sequence spans 338 residues: Phenylalanine--tRNA ligase alpha subunit (338 aa).

A Mg(2+)-binding site is contributed by Glu-253.

The protein belongs to the class-II aminoacyl-tRNA synthetase family. Phe-tRNA synthetase alpha subunit type 1 subfamily. In terms of assembly, tetramer of two alpha and two beta subunits. Requires Mg(2+) as cofactor.

Its subcellular location is the cytoplasm. It carries out the reaction tRNA(Phe) + L-phenylalanine + ATP = L-phenylalanyl-tRNA(Phe) + AMP + diphosphate + H(+). The polypeptide is Phenylalanine--tRNA ligase alpha subunit (Geobacter metallireducens (strain ATCC 53774 / DSM 7210 / GS-15)).